Here is a 434-residue protein sequence, read N- to C-terminus: Ribosomal protein uS12 methylthiotransferase RimO (434 aa).

One can recognise an MTTase N-terminal domain in the interval 6–122; the sequence is SKLYLLTLGC…IIAELGGHYK (117 aa). Residues Cys15, Cys51, Cys85, Cys146, Cys150, and Cys153 each coordinate [4Fe-4S] cluster. In terms of domain architecture, Radical SAM core spans 132–361; it reads LTPPYFSYLK…MAAQEEIAYA (230 aa). Positions 364-434 constitute a TRAM domain; it reads QALVGSFMPV…AFDLFGSLVL (71 aa).

Belongs to the methylthiotransferase family. RimO subfamily. It depends on [4Fe-4S] cluster as a cofactor.

The protein localises to the cytoplasm. It catalyses the reaction L-aspartate(89)-[ribosomal protein uS12]-hydrogen + (sulfur carrier)-SH + AH2 + 2 S-adenosyl-L-methionine = 3-methylsulfanyl-L-aspartate(89)-[ribosomal protein uS12]-hydrogen + (sulfur carrier)-H + 5'-deoxyadenosine + L-methionine + A + S-adenosyl-L-homocysteine + 2 H(+). Catalyzes the methylthiolation of an aspartic acid residue of ribosomal protein uS12. This is Ribosomal protein uS12 methylthiotransferase RimO from Chloroherpeton thalassium (strain ATCC 35110 / GB-78).